A 383-amino-acid polypeptide reads, in one-letter code: Subtelomeric hrmA-associated cluster protein AFUB_078970 (383 aa).

2 disordered regions span residues 118–145 (NPVSEVPESPPSTVKSSGDASVSDKDDD) and 249–318 (QATQ…SARP). Residues 119–134 (PVSEVPESPPSTVKSS) are compositionally biased toward low complexity. The Myb-like domain maps to 318–364 (PYSAAEDDILQTLVARGLAWEEIEKEFGLRFAKRTMRSLQMRWSRKL).

Myb-like domain-containing protein; part of the subtelomeric hrmA-associated cluster (HAC) containing genes that alter the hyphal surface (such as reduced total chitin or increased beta-glucan exposure) and perturb inter-hyphal interactions within the developing biofilms, resulting in a loss of vertically aligned polarized growing filaments. Consequently, this hypoxia-typic morphotype (called H-MORPH) with altered biofilm architecture leads to increased hypoxia fitness, increased host inflammation, rapid disease progression, and mortality in a murine model of invasive aspergillosis. The chain is Subtelomeric hrmA-associated cluster protein AFUB_078970 from Aspergillus fumigatus (strain CBS 144.89 / FGSC A1163 / CEA10) (Neosartorya fumigata).